A 929-amino-acid polypeptide reads, in one-letter code: Ras guanine nucleotide exchange factor M (929 aa).

Polar residues predominate over residues 1-15 (MWQKPSLTKSMMNEV). Disordered stretches follow at residues 1–102 (MWQK…AAGS) and 169–316 (TNNN…SKSL). A compositionally biased stretch (low complexity) spans 16 to 33 (SSNSPKSPTLTSSPSTQS). Gly residues predominate over residues 44-67 (LDGGGGGSNRLIFGGSGGGSGGGS). Composition is skewed to low complexity over residues 68-80 (LPSSPVSSPVNPF) and 169-191 (TNNNTTTTTNTNNSNNNNSNNDG). The segment covering 192–202 (SGSGSGAGGSF) has biased composition (gly residues). The segment covering 203-246 (IGTTTSAKTTSTTSTSAATTTTTTTTSSSSSSPSSSSPSSTSPT) has biased composition (low complexity). Polar residues predominate over residues 247–256 (IASNNDNNNK). A compositionally biased stretch (low complexity) spans 270–287 (PPLTLSQSQTQQQQQQKV). A compositionally biased stretch (polar residues) spans 295–305 (RFSTNSSGSQS). In terms of domain architecture, N-terminal Ras-GEF spans 390-528 (NKFVVVSGPK…PILDLYEKLK (139 aa)). Positions 540 to 583 (SLSGSGGISNNNNGSDLKNSNNGNNSSNNNNSSSNSSSSSSSSD) are disordered. The Ras-GEF domain maps to 676–911 (SPQDIAKQLT…YAFSKFIESP (236 aa)).

In terms of biological role, promotes the exchange of Ras-bound GDP by GTP. The chain is Ras guanine nucleotide exchange factor M (gefM) from Dictyostelium discoideum (Social amoeba).